Reading from the N-terminus, the 574-residue chain is Serine/threonine-protein kinase B (574 aa).

Positions 34–301 (YQTLGLLGKG…VLDALEMPTY (268 aa)) constitute a Protein kinase domain. Residues 40 to 48 (LGKGGFGAT) and Lys-65 contribute to the ATP site. The active-site Proton acceptor is Asp-163. The disordered stretch occupies residues 319-407 (GAGDEPATGI…GGSVGAGGID (89 aa)). Residues 343–364 (TRFNTNVQPRDPSSTSLNTGIK) show a composition bias toward polar residues. 2 Pentapeptide repeat domains span residues 454–493 (QNLV…DFGK) and 504–543 (ANLS…NFSG).

It belongs to the protein kinase superfamily. Ser/Thr protein kinase family. In terms of processing, autophosphorylated.

It catalyses the reaction L-seryl-[protein] + ATP = O-phospho-L-seryl-[protein] + ADP + H(+). The enzyme catalyses L-threonyl-[protein] + ATP = O-phospho-L-threonyl-[protein] + ADP + H(+). Functionally, protein kinase required for cell motility, but not for phototaxis. The protein is Serine/threonine-protein kinase B (spkB) of Synechocystis sp. (strain ATCC 27184 / PCC 6803 / Kazusa).